The primary structure comprises 231 residues: NADH-ubiquinone oxidoreductase chain 4 (231 aa).

Transmembrane regions (helical) follow at residues P1–I21, M34–L54, I63–G85, A89–Y111, I128–P148, L156–S176, and L211–I231.

This sequence belongs to the complex I subunit 4 family.

It localises to the mitochondrion membrane. The enzyme catalyses a ubiquinone + NADH + 5 H(+)(in) = a ubiquinol + NAD(+) + 4 H(+)(out). In terms of biological role, core subunit of the mitochondrial membrane respiratory chain NADH dehydrogenase (Complex I) that is believed to belong to the minimal assembly required for catalysis. Complex I functions in the transfer of electrons from NADH to the respiratory chain. The immediate electron acceptor for the enzyme is believed to be ubiquinone. This is NADH-ubiquinone oxidoreductase chain 4 (MT-ND4) from Agkistrodon piscivorus piscivorus (Eastern cottonmouth).